A 591-amino-acid chain; its full sequence is Protein phosphatase EYA1 (591 aa).

Disordered stretches follow at residues 1–95 (MEMQ…SYPH), 150–169 (GLSQSQSPGQTGFLSYGTSF), and 239–319 (MTSS…PDSD). The segment covering 8 to 23 (SPHSRLSGSSESPSGP) has biased composition (low complexity). The span at 28–53 (SHINSTSMTPNGTEVKTEPMSSSEIA) shows a compositional bias: polar residues. The segment covering 56-75 (AADGSLDSFSGSALGSSSFS) has biased composition (low complexity). The segment covering 78-87 (PAHPFSPPQI) has biased composition (pro residues). Over residues 240 to 252 (TSSNTSPTTPSTN) the composition is skewed to low complexity. Polar residues predominate over residues 253 to 286 (ATYQLQEPPSGVTSQAVTDPTAEYSTIHSPSTPI). A compositionally biased stretch (basic and acidic residues) spans 287–302 (KETDSERLRRGSDGKS). The active-site Nucleophile is the Asp-327. Positions 327, 329, and 555 each coordinate Mg(2+). The Proton donor role is filled by Asp-329.

Belongs to the HAD-like hydrolase superfamily. EYA family. In terms of assembly, probably interacts with SIX2, SIX4 and SIX5. Interacts with H2AX in response to DNA damage. Interacts with SIX3; promotes EYA1 translocation to the nucleus. The cofactor is Mg(2+). Sumoylated with SUMO1. Extensively expressed in cranial placodes, branchial arches, CNS and developing eye and nose.

The protein localises to the cytoplasm. It is found in the nucleus. The enzyme catalyses O-phospho-L-tyrosyl-[protein] + H2O = L-tyrosyl-[protein] + phosphate. The catalysed reaction is O-phospho-L-seryl-[protein] + H2O = L-seryl-[protein] + phosphate. It catalyses the reaction O-phospho-L-threonyl-[protein] + H2O = L-threonyl-[protein] + phosphate. Functionally, functions both as protein phosphatase and as transcriptional coactivator for SIX1, and probably also for SIX2, SIX4 and SIX5. Tyrosine phosphatase that dephosphorylates 'Tyr-142' of histone H2AX (H2AXY142ph) and promotes efficient DNA repair via the recruitment of DNA repair complexes containing MDC1. 'Tyr-142' phosphorylation of histone H2AX plays a central role in DNA repair and acts as a mark that distinguishes between apoptotic and repair responses to genotoxic stress. Its function as histone phosphatase may contribute to its function in transcription regulation during organogenesis. Also has phosphatase activity with proteins phosphorylated on Ser and Thr residues (in vitro). Required for normal embryonic development of the craniofacial and trunk skeleton, kidneys and ears. Together with SIX1, it plays an important role in hypaxial muscle development; in this it is functionally redundant with EYA2. This chain is Protein phosphatase EYA1 (Eya1), found in Mus musculus (Mouse).